Here is a 235-residue protein sequence, read N- to C-terminus: RNA polymerase sigma factor SigI7 (235 aa).

The short motif at 49–62 is the Polymerase core binding element; that stretch reads DELSIALMAFVETI. The H-T-H motif DNA-binding region spans 191 to 210; it reads VAEIEQSLKIPRKTIERARK.

This sequence belongs to the sigma-70 factor family. SigI subfamily. As to quaternary structure, interacts with RsgI7.

The protein resides in the cytoplasm. Negatively regulated by the anti-sigma-I factor RsgI7. Functionally, sigma factors are initiation factors that promote the attachment of RNA polymerase to specific initiation sites and are then released. The chain is RNA polymerase sigma factor SigI7 from Acetivibrio thermocellus (strain ATCC 27405 / DSM 1237 / JCM 9322 / NBRC 103400 / NCIMB 10682 / NRRL B-4536 / VPI 7372) (Clostridium thermocellum).